Here is a 556-residue protein sequence, read N- to C-terminus: Probable Xaa-Pro aminopeptidase SS1G_06948 (556 aa).

Mn(2+)-binding residues include D305, D316, E460, and E501.

The protein belongs to the peptidase M24B family. Requires Mn(2+) as cofactor.

The enzyme catalyses Release of any N-terminal amino acid, including proline, that is linked to proline, even from a dipeptide or tripeptide.. Its function is as follows. Catalyzes the removal of a penultimate prolyl residue from the N-termini of peptides. In Sclerotinia sclerotiorum (strain ATCC 18683 / 1980 / Ss-1) (White mold), this protein is Probable Xaa-Pro aminopeptidase SS1G_06948.